Reading from the N-terminus, the 116-residue chain is uncharacterized protein (116 aa).

The next 2 helical transmembrane spans lie at 40–60 and 72–92; these read AIVKVDFFSFDGAGFCIIGIL and FLGSICRSIFSIVAQMQVVPI.

Its subcellular location is the membrane. This is an uncharacterized protein from Saccharomyces cerevisiae (strain ATCC 204508 / S288c) (Baker's yeast).